A 311-amino-acid chain; its full sequence is Olfactory receptor 5AN1 (311 aa).

The Extracellular portion of the chain corresponds to 1 to 26 (MTGGGNITEITYFILLGFSDFPRIIK). N-linked (GlcNAc...) asparagine glycosylation is present at Asn6. Residues 27 to 47 (VLFTIFLVIYITSLAWNLSLI) traverse the membrane as a helical segment. Topologically, residues 48–55 (VLIRMDSH) are cytoplasmic. A helical transmembrane segment spans residues 56 to 76 (LHTPMYFFLSNLSFIDVCYIS). The Extracellular segment spans residues 77-100 (STVPKMLSNLLQEQQTITFVGCII). An intrachain disulfide couples Cys98 to Cys190. The chain crosses the membrane as a helical span at residues 101 to 121 (QYFIFSTMGLSESCLMTAMAY). The Cytoplasmic segment spans residues 122-134 (DRYAAICNPLLYS). A helical transmembrane segment spans residues 135–155 (SIMSPTLCVWMVLGAYMTGLT). Over 156 to 197 (ASLFQIGALLQLHFCGSNVIRHFFCDMPQLLILSCTDTFFVQ) the chain is Extracellular. Residues 198-218 (VMTAILTMFFGIASALVIMIS) form a helical membrane-spanning segment. Residues 219 to 238 (YGYIGISIMKITSAKGRSKA) lie on the Cytoplasmic side of the membrane. Residues 239-259 (FNTCASHLTAVSLFYTSGIFV) traverse the membrane as a helical segment. Residues 260–272 (YLSSSSGGSSSFD) are Extracellular-facing. A helical transmembrane segment spans residues 273-293 (RFASVFYTVVIPMLNPLIYSL). Topologically, residues 294-311 (RNKEIKDALKRLQKRKCC) are cytoplasmic.

The protein belongs to the G-protein coupled receptor 1 family.

The protein localises to the cell membrane. Odorant receptor for musk, which specifically recognizes muscone, musk xylol, and musk ketone. Ligand-binding causes a conformation change that triggers signaling via G(s)-class of G alpha protein GNAL, activating adenylyl cyclase. The protein is Olfactory receptor 5AN1 of Homo sapiens (Human).